The chain runs to 203 residues: Nascent polypeptide-associated complex subunit alpha-like protein 1 (203 aa).

The segment covering 1–23 has biased composition (basic and acidic residues); that stretch reads MTTEEKEILAAKLEEQKIDLDKP. The tract at residues 1-71 is disordered; that stretch reads MTTEEKEILA…SEKKSRKAML (71 aa). The span at 24-50 shows a compositional bias: acidic residues; that stretch reads EVEDDDDNEDDDSDDDDKDDDEADGLD. Serine 36 carries the phosphoserine modification. The 66-residue stretch at 60-125 folds into the NAC-A/B domain; the sequence is SRSEKKSRKA…AKIEDLSSQI (66 aa). The UBA domain occupies 158-203; the sequence is EVDEEGVEPKDIELVMTQAGVSRPNAVKALKAADGDIVSAIMELTT.

This sequence belongs to the NAC-alpha family.

May promote appropriate targeting of ribosome-nascent polypeptide complexes. The chain is Nascent polypeptide-associated complex subunit alpha-like protein 1 from Arabidopsis thaliana (Mouse-ear cress).